Reading from the N-terminus, the 352-residue chain is Uroporphyrinogen decarboxylase (352 aa).

Residues 27–31, D77, Y154, T209, and H325 each bind substrate; that span reads RQAGR.

Belongs to the uroporphyrinogen decarboxylase family. Homodimer.

It localises to the cytoplasm. The enzyme catalyses uroporphyrinogen III + 4 H(+) = coproporphyrinogen III + 4 CO2. It functions in the pathway porphyrin-containing compound metabolism; protoporphyrin-IX biosynthesis; coproporphyrinogen-III from 5-aminolevulinate: step 4/4. In terms of biological role, catalyzes the decarboxylation of four acetate groups of uroporphyrinogen-III to yield coproporphyrinogen-III. This Legionella pneumophila subsp. pneumophila (strain Philadelphia 1 / ATCC 33152 / DSM 7513) protein is Uroporphyrinogen decarboxylase.